The following is a 243-amino-acid chain: 7-cyano-7-deazaguanine synthase (243 aa).

9-19 (FSGGQDSTTCL) is an ATP binding site. Residues Cys205, Cys220, Cys223, and Cys226 each coordinate Zn(2+).

This sequence belongs to the QueC family. It depends on Zn(2+) as a cofactor.

The enzyme catalyses 7-carboxy-7-deazaguanine + NH4(+) + ATP = 7-cyano-7-deazaguanine + ADP + phosphate + H2O + H(+). It participates in purine metabolism; 7-cyano-7-deazaguanine biosynthesis. In terms of biological role, catalyzes the ATP-dependent conversion of 7-carboxy-7-deazaguanine (CDG) to 7-cyano-7-deazaguanine (preQ(0)). This is 7-cyano-7-deazaguanine synthase from Albidiferax ferrireducens (strain ATCC BAA-621 / DSM 15236 / T118) (Rhodoferax ferrireducens).